We begin with the raw amino-acid sequence, 119 residues long: Small ribosomal subunit protein uS13 (119 aa).

A compositionally biased stretch (basic residues) spans 94–113 (GLPVRGQRTKTNARTRKGPR). The segment at 94–119 (GLPVRGQRTKTNARTRKGPRKAIGAK) is disordered.

This sequence belongs to the universal ribosomal protein uS13 family. Part of the 30S ribosomal subunit. Forms a loose heterodimer with protein S19. Forms two bridges to the 50S subunit in the 70S ribosome.

In terms of biological role, located at the top of the head of the 30S subunit, it contacts several helices of the 16S rRNA. In the 70S ribosome it contacts the 23S rRNA (bridge B1a) and protein L5 of the 50S subunit (bridge B1b), connecting the 2 subunits; these bridges are implicated in subunit movement. Contacts the tRNAs in the A and P-sites. This chain is Small ribosomal subunit protein uS13, found in Nitrosomonas europaea (strain ATCC 19718 / CIP 103999 / KCTC 2705 / NBRC 14298).